Here is an 831-residue protein sequence, read N- to C-terminus: MKVHMHTKFCLICLLTFIFHHCNHCHEEHDHGPEALHRQHRGMTELEPSKFSKQAAENEKKYYIEKLFERYGENGRLSFFGLEKLLTNLGLGERKVVEINHEDLGHDHVSHLDILAVQEGKHFHSHNHQHSHNHLNSENQTVTSVSTKRNHKCDPEKETVEVSVKSDDKHMHDHNHRLRHHHRLHHHLDHNNTHHFHNDSITPSERGEPSNEPSTETNKTQEQSDVKLPKGKRKKKGRKSNENSEVITPGFPPNHDQGEQYEHNRVHKPDRVHNPGHSHVHLPERNGHDPGRGHQDLDPDNEGELRHTRKREAPHVKNNAIISLRKDLNEDDHHHECLNVTQLLKYYGHGANSPISTDLFTYLCPALLYQIDSRLCIEHFDKLLVEDINKDKNLVPEDEANIGASAWICGIISITVISLLSLLGVILVPIINQGCFKFLLTFLVALAVGTMSGDALLHLLPHSQGGHDHSHQHAHGHGHSHGHESNKFLEEYDAVLKGLVALGGIYLLFIIEHCIRMFKHYKQQRGKQKWFMKQNTEESTIGRKLSDHKLNNTPDSDWLQLKPLAGTDDSVVSEDRLNETELTDLEGQQESPPKNYLCIEEEKIIDHSHSDGLHTIHEHDLHAAAHNHHGENKTVLRKHNHQWHHKHSHHSHGPCHSGSDLKETGIANIAWMVIMGDGIHNFSDGLAIGAAFSAGLTGGISTSIAVFCHELPHELGDFAVLLKAGMTVKQAIVYNLLSAMMAYIGMLIGTAVGQYANNITLWIFAVTAGMFLYVALVDMLPEMLHGDGDNEEHGFCPVGQFILQNLGLLFGFAIMLVIALYEDKIVFDIQF.

A signal peptide spans 1–25 (MKVHMHTKFCLICLLTFIFHHCNHC). Residues 126–318 (HNHQHSHNHL…RKREAPHVKN (193 aa)) form a disordered region. Residues 138 to 147 (ENQTVTSVST) show a composition bias toward polar residues. Residue asparagine 139 is glycosylated (N-linked (GlcNAc...) asparagine). The segment covering 152-171 (KCDPEKETVEVSVKSDDKHM) has biased composition (basic and acidic residues). Residues 172-188 (HDHNHRLRHHHRLHHHL) show a composition bias toward basic residues. Residues 189–198 (DHNNTHHFHN) show a composition bias toward basic and acidic residues. 2 N-linked (GlcNAc...) asparagine glycosylation sites follow: asparagine 198 and asparagine 218. Residues 211–221 (NEPSTETNKTQ) show a composition bias toward polar residues. Residues 229-238 (PKGKRKKKGR) are compositionally biased toward basic residues. Composition is skewed to basic and acidic residues over residues 256 to 273 (DQGE…DRVH) and 281 to 315 (HLPE…EAPH). N-linked (GlcNAc...) asparagine glycosylation is present at asparagine 339. The next 2 helical transmembrane spans lie at 411-431 (IISI…VPII) and 438-458 (FLLT…ALLH). The segment at 464–484 (QGGHDHSHQHAHGHGHSHGHE) is disordered. The chain crosses the membrane as a helical span at residues 495-515 (VLKGLVALGGIYLLFIIEHCI). 2 positions are modified to phosphothreonine: threonine 536 and threonine 553. Serine 591 carries the phosphoserine modification. 4 consecutive transmembrane segments (helical) span residues 687 to 707 (AIGA…IAVF), 732 to 752 (IVYN…GTAV), 759 to 779 (ITLW…LVDM), and 801 to 821 (FILQ…IALY).

The protein belongs to the ZIP transporter (TC 2.A.5) family. In terms of assembly, interacts with SLC39A6; which triggers cells to undergo EMT and mitosis. Found in a complex with SLC39A6, SLC39A10 and with the 'Ser-727' phosphorylated form of STAT3 throughout mitosis. Found in a complex with SLC39A6, SLC39A10 and with NCAM1; this complex controls NCAM1 phosphorylation and integration into focal adhesion complexes during epithelial-tomesenchymal transition. Found in a complex with SLC39A6, SLC39A10 and with GSK3B that controls NCAM1 phosphorylation. In terms of processing, undergoes N-terminal ectodomain shedding.

Its subcellular location is the cell membrane. The protein localises to the apical cell membrane. It carries out the reaction Zn(2+)(in) = Zn(2+)(out). Its function is as follows. Zinc-influx transporter. When associated with SLC39A6, the heterodimer formed by SLC39A10 and SLC39A6 mediates cellular zinc uptake to trigger cells to undergo epithelial-to-mesenchymal transition (EMT). SLC39A10-SLC39A6 heterodimers play also an essentiel role in initiating mitosis by importing zinc into cells to initiate a pathway resulting in the onset of mitosis. Plays an important for both mature B-cell maintenance and humoral immune responses. When associated with SLC39A10, the heterodimer controls NCAM1 phosphorylation and integration into focal adhesion complexes during EMT. In Homo sapiens (Human), this protein is Zinc transporter ZIP10.